We begin with the raw amino-acid sequence, 308 residues long: Peroxisomal targeting signal 2 receptor (308 aa).

WD repeat units follow at residues 57–88 (DVED…RLFD), 101–132 (EHKA…KLWL), 145–176 (GSNS…KFWD), 187–218 (EIPN…YCYD), 231–262 (GHQL…RIFD), and 274–306 (LHSE…YIWN).

The protein belongs to the WD repeat peroxin-7 family. In terms of assembly, interacts with PEX21.

The protein localises to the cytoplasm. It is found in the cytosol. The protein resides in the peroxisome matrix. Its function is as follows. Receptor required for the peroxisomal import of proteins containing a C-terminal PTS2-type peroxisomal targeting signal, such as 3-oxoacyl-CoA thiolase. Specifically binds to cargo proteins containing a PTS2 peroxisomal targeting signal in the cytosol. Cargo protein-binding triggers interaction with PEX21 and formation of a ternary complex composed of PEX21 and PEX7 along with PTS2-containing cargo proteins, which is tranlocated into peroxisomes by passing through the PEX13-PEX14 docking complex. The sequence is that of Peroxisomal targeting signal 2 receptor (pex7) from Schizosaccharomyces pombe (strain 972 / ATCC 24843) (Fission yeast).